We begin with the raw amino-acid sequence, 488 residues long: 3-octaprenyl-4-hydroxybenzoate carboxy-lyase (488 aa).

N172 lines the Mn(2+) pocket. Residues 175-177 (IYR), 189-191 (RWL), and 194-195 (RG) each bind prenylated FMN. A Mn(2+)-binding site is contributed by E238. D287 serves as the catalytic Proton donor.

It belongs to the UbiD family. Homohexamer. Requires prenylated FMN as cofactor. It depends on Mn(2+) as a cofactor.

It is found in the cell membrane. It carries out the reaction a 4-hydroxy-3-(all-trans-polyprenyl)benzoate + H(+) = a 2-(all-trans-polyprenyl)phenol + CO2. It functions in the pathway cofactor biosynthesis; ubiquinone biosynthesis. In terms of biological role, catalyzes the decarboxylation of 3-octaprenyl-4-hydroxy benzoate to 2-octaprenylphenol, an intermediate step in ubiquinone biosynthesis. The polypeptide is 3-octaprenyl-4-hydroxybenzoate carboxy-lyase (Pseudomonas putida (strain ATCC 47054 / DSM 6125 / CFBP 8728 / NCIMB 11950 / KT2440)).